The chain runs to 255 residues: Hydroxyacylglutathione hydrolase (255 aa).

Zn(2+)-binding residues include His-56, His-58, Asp-60, His-61, His-114, Asp-133, and His-171.

The protein belongs to the metallo-beta-lactamase superfamily. Glyoxalase II family. Monomer. Zn(2+) serves as cofactor.

The catalysed reaction is an S-(2-hydroxyacyl)glutathione + H2O = a 2-hydroxy carboxylate + glutathione + H(+). The protein operates within secondary metabolite metabolism; methylglyoxal degradation; (R)-lactate from methylglyoxal: step 2/2. In terms of biological role, thiolesterase that catalyzes the hydrolysis of S-D-lactoyl-glutathione to form glutathione and D-lactic acid. This is Hydroxyacylglutathione hydrolase from Ruegeria pomeroyi (strain ATCC 700808 / DSM 15171 / DSS-3) (Silicibacter pomeroyi).